The following is a 654-amino-acid chain: MTMSQSQTKKGRIIGIDLGTTNSCVAVMEGGAPKVIASAEGTRTTPSVVAYKGNERLVGIPAKRQAVTNPENTITSSKRFIGRKYQEVLSEIKTVPYKVTNNNNGDAVFEIQGKIVTPEEIAAQILIKMKETAEAYLGEKITEAVITVPAYFNDSQRQSTKDAGRIAGLDVKRIIPEPTAAALAYGLDKENADKKIAVFDLGGGTFDISVLEIGDGVFEVLSTSGDTHLGGDDFDNAILNWMLETFKQEQGIDLRNDKMALQRLRDAAEKAKIELSGVQQTEINQPFITMDASGPKHLTMTLTRSKLESLTHDLIERTREPCLKALKDSGLNKDDISEVILVGGMSRMPAVQEVVKSIFGKEGHKGVNPDEVVAVGAAIQGGVLTGVVKDVLLLDVTPLTLGIETLGGVMTPLVERNTTIPTQKKQIFSTAADNQPAVTIRVLQGERKMANDNKEIGRFDLADIPPSPRGTPQIEVAFDIDADGILHVSAKDLSSGKEQKIRIEAQSGLQEEEIKRMVRDAEEHAEEDKKRKEEVEIRNEADSLAFRAQKALDEYKDKVPQQIADDISNKIEAVKKALETTDIARIRSAKDELERQMQQIGEVMSKAAGQSETQSTGPGSYQESSNQSSQHQTNNNKPDDIEEAEVEILDDKKP.

Thr205 is modified (phosphothreonine; by autocatalysis). The segment at 592-654 (ELERQMQQIG…EVEILDDKKP (63 aa)) is disordered. Residues 608-621 (AGQSETQSTGPGSY) show a composition bias toward polar residues. The segment covering 622 to 636 (QESSNQSSQHQTNNN) has biased composition (low complexity).

It belongs to the heat shock protein 70 family.

Functionally, acts as a chaperone. This Protochlamydia amoebophila (strain UWE25) protein is Chaperone protein DnaK.